The sequence spans 634 residues: BTB/POZ domain-containing protein At1g03010 (634 aa).

One can recognise a BTB domain in the interval 38–103 (SDLTVQVGSS…CYGINIEINL (66 aa)). An NPH3 domain is found at 205 to 503 (DWWGKSLAVL…VQVLYFEQIR (299 aa)). Tyrosine 444 is subject to Phosphotyrosine. A coiled-coil region spans residues 542–580 (RDNYASVRRENRELKLEVARMRMRLTDLEKDHISIKQEL).

Belongs to the NPH3 family.

The protein operates within protein modification; protein ubiquitination. In terms of biological role, may act as a substrate-specific adapter of an E3 ubiquitin-protein ligase complex (CUL3-RBX1-BTB) which mediates the ubiquitination and subsequent proteasomal degradation of target proteins. The protein is BTB/POZ domain-containing protein At1g03010 of Arabidopsis thaliana (Mouse-ear cress).